The sequence spans 83 residues: UPF0297 protein DSY2420 (83 aa).

Belongs to the UPF0297 family.

The sequence is that of UPF0297 protein DSY2420 from Desulfitobacterium hafniense (strain Y51).